The primary structure comprises 251 residues: NADPH-dependent oxidoreductase (251 aa).

Belongs to the flavin oxidoreductase frp family. It depends on FMN as a cofactor.

Functionally, reduces FMN, organic nitro compounds and disulfide DTNB. Involved in maintenance of the cellular redox state and the disulfide stress response. In Staphylococcus saprophyticus subsp. saprophyticus (strain ATCC 15305 / DSM 20229 / NCIMB 8711 / NCTC 7292 / S-41), this protein is NADPH-dependent oxidoreductase (nfrA).